A 261-amino-acid chain; its full sequence is Carnitinyl-CoA dehydratase (261 aa).

The Nucleophile role is filled by glutamate 111. Glutamate 131 serves as the catalytic Proton acceptor.

It belongs to the enoyl-CoA hydratase/isomerase family.

It carries out the reaction (R)-carnitinyl-CoA = crotonobetainyl-CoA + H2O. It functions in the pathway amine and polyamine metabolism; carnitine metabolism. Catalyzes the reversible dehydration of L-carnitinyl-CoA to crotonobetainyl-CoA. This Citrobacter koseri (strain ATCC BAA-895 / CDC 4225-83 / SGSC4696) protein is Carnitinyl-CoA dehydratase.